Here is a 101-residue protein sequence, read N- to C-terminus: Small ribosomal subunit protein uS10 (101 aa).

It belongs to the universal ribosomal protein uS10 family. Part of the 30S ribosomal subunit.

In terms of biological role, involved in the binding of tRNA to the ribosomes. The protein is Small ribosomal subunit protein uS10 of Phocaeicola vulgatus (strain ATCC 8482 / DSM 1447 / JCM 5826 / CCUG 4940 / NBRC 14291 / NCTC 11154) (Bacteroides vulgatus).